The following is a 73-amino-acid chain: Large ribosomal subunit protein bL31c (73 aa).

This sequence belongs to the bacterial ribosomal protein bL31 family. Type A subfamily. In terms of assembly, part of the 50S ribosomal subunit.

It is found in the plastid. The protein localises to the chloroplast. In terms of biological role, binds the 23S rRNA. The chain is Large ribosomal subunit protein bL31c from Palmaria palmata (Dulse).